A 532-amino-acid chain; its full sequence is Cytochrome P450 monooxygenase pgmC (532 aa).

Residues 15-32 (ISTLAVLIGFIALLTAWL) traverse the membrane as a helical segment. Heme is bound at residue C438.

It belongs to the cytochrome P450 family. It depends on heme as a cofactor.

The protein localises to the membrane. It functions in the pathway pigment biosynthesis. Its pathway is secondary metabolite biosynthesis. Its function is as follows. Cytochrome P450 monooxygenase; part of the gene cluster that mediates the biosynthesis of pleosporalin A, ascomycone A, as well as a third cryptic naphthoquinone derived pigment, all responsible for the coloration of conidia. Involved in the oxidation of fusarubinaldehyde at C-9. PgmC has low substrate-specificity and is also able to use the pgmA product 3-acetonyl-1,6,8-trihydroxy-2-naphthaldehyde as a substrate. The pathway begins with the biosynthesis of the cyclized heptaketide 3-acetonyl-1,6,8-trihydroxy-2-naphthaldehyde by the NR-PKS pgmA. The C-6 hydroxyl group is further methylated by the O-methyltransferase pgmB to yield fusarubinaldehyde which is in turn oxidized by the cytochrome P450 monooxygenase pgmC at C-9. The C-1 hydroxyl group is then methylated spontaneously. Although pgmE, pgmD and pgmH are essential for the production of pleosporalin A, it is not the case for the 2 other final products and it remains difficult to assign a specific function to each enzyme. PgmF and pgmG seem not to be involved in pigment biosynthesis although they were regulated by the cluster-specific transcription factor pgmR. This Aspergillus terreus (strain NIH 2624 / FGSC A1156) protein is Cytochrome P450 monooxygenase pgmC.